A 149-amino-acid polypeptide reads, in one-letter code: UPF0208 membrane protein PBPRA2797 (149 aa).

2 consecutive transmembrane segments (helical) span residues Phe-41–Phe-60 and Ala-65–Leu-87.

The protein belongs to the UPF0208 family.

It localises to the cell inner membrane. The sequence is that of UPF0208 membrane protein PBPRA2797 from Photobacterium profundum (strain SS9).